Consider the following 1038-residue polypeptide: DNA polymerase delta catalytic subunit (1038 aa).

The disordered stretch occupies residues 1-29; that stretch reads MSHSIPITSSPPPALKKLKLPNGSEEPSE. Zn(2+)-binding residues include cysteine 942, cysteine 945, cysteine 958, and cysteine 961. The CysA-type zinc-finger motif lies at 942–961; sequence CVSCRTPLKKDNLGALCPNC. [4Fe-4S] cluster is bound by residues cysteine 992, cysteine 995, cysteine 1005, and cysteine 1010. Positions 992–1010 match the CysB motif motif; sequence CQRCQGSLHQEVLCSNKDC.

This sequence belongs to the DNA polymerase type-B family. Heterodimer with subunits of 125 kDa and 50 kDa. The 125 kDa subunit contains the polymerase active site and most likely the active site for the 3'-5' exonuclease activity. Requires [4Fe-4S] cluster as cofactor.

The protein resides in the nucleus. It carries out the reaction DNA(n) + a 2'-deoxyribonucleoside 5'-triphosphate = DNA(n+1) + diphosphate. Its function is as follows. This polymerase possesses two enzymatic activities: DNA synthesis (polymerase) and an exonucleolytic activity that degrades single-stranded DNA in the 3'- to 5'-direction. The sequence is that of DNA polymerase delta catalytic subunit (POL3) from Candida albicans (Yeast).